The chain runs to 185 residues: Ribosome-recycling factor (185 aa).

This sequence belongs to the RRF family.

Its subcellular location is the cytoplasm. Responsible for the release of ribosomes from messenger RNA at the termination of protein biosynthesis. May increase the efficiency of translation by recycling ribosomes from one round of translation to another. This Pseudothermotoga lettingae (strain ATCC BAA-301 / DSM 14385 / NBRC 107922 / TMO) (Thermotoga lettingae) protein is Ribosome-recycling factor.